We begin with the raw amino-acid sequence, 115 residues long: Ribonuclease P protein component (115 aa).

Belongs to the RnpA family. Consists of a catalytic RNA component (M1 or rnpB) and a protein subunit.

The catalysed reaction is Endonucleolytic cleavage of RNA, removing 5'-extranucleotides from tRNA precursor.. In terms of biological role, RNaseP catalyzes the removal of the 5'-leader sequence from pre-tRNA to produce the mature 5'-terminus. It can also cleave other RNA substrates such as 4.5S RNA. The protein component plays an auxiliary but essential role in vivo by binding to the 5'-leader sequence and broadening the substrate specificity of the ribozyme. This is Ribonuclease P protein component from Bacillus cereus (strain Q1).